Here is a 99-residue protein sequence, read N- to C-terminus: NADH-quinone oxidoreductase subunit K (99 aa).

3 consecutive transmembrane segments (helical) span residues 3–23 (PMYY…GVLL), 28–48 (IIVF…LVTF), and 62–82 (FFVM…IVAI).

This sequence belongs to the complex I subunit 4L family. In terms of assembly, NDH-1 is composed of 14 different subunits. Subunits NuoA, H, J, K, L, M, N constitute the membrane sector of the complex.

Its subcellular location is the cell membrane. The enzyme catalyses a quinone + NADH + 5 H(+)(in) = a quinol + NAD(+) + 4 H(+)(out). NDH-1 shuttles electrons from NADH, via FMN and iron-sulfur (Fe-S) centers, to quinones in the respiratory chain. The immediate electron acceptor for the enzyme in this species is believed to be a menaquinone. Couples the redox reaction to proton translocation (for every two electrons transferred, four hydrogen ions are translocated across the cytoplasmic membrane), and thus conserves the redox energy in a proton gradient. The sequence is that of NADH-quinone oxidoreductase subunit K from Acidothermus cellulolyticus (strain ATCC 43068 / DSM 8971 / 11B).